The primary structure comprises 309 residues: Malate dehydrogenase (309 aa).

NAD(+) is bound by residues 9–14 (GAGFVG) and aspartate 33. The substrate site is built by arginine 82 and arginine 88. NAD(+) contacts are provided by residues asparagine 95 and 118–120 (VNN). The substrate site is built by asparagine 120 and arginine 151. Histidine 175 functions as the Proton acceptor in the catalytic mechanism.

This sequence belongs to the LDH/MDH superfamily. MDH type 3 family.

The catalysed reaction is (S)-malate + NAD(+) = oxaloacetate + NADH + H(+). In terms of biological role, catalyzes the reversible oxidation of malate to oxaloacetate. The sequence is that of Malate dehydrogenase from Roseiflexus castenholzii (strain DSM 13941 / HLO8).